A 246-amino-acid polypeptide reads, in one-letter code: MSQVNMRDMLKAGVHFGHQTRYWNPKMGKFIFGARNKIHIINLEKTLPMFNEALTFVERLAAGKNKILFVGTKRSAGKIVREEAARCGMPYVDHRWLGGMLTNYKTIRQSIKRLRDLETQAQDGTFDKLTKKEALMRSRDLEKLERSLGGIKDMGGLPDALFVIDVDHERIAITEANKLGIPVIGVVDTNSSPEGVDYVIPGNDDAIRAVQLYLNSMAEAVIRGKQGAATSADEFVEEAPAESAEG.

This sequence belongs to the universal ribosomal protein uS2 family.

This is Small ribosomal subunit protein uS2 from Pseudomonas paraeruginosa (strain DSM 24068 / PA7) (Pseudomonas aeruginosa (strain PA7)).